Reading from the N-terminus, the 263-residue chain is Hemophilin (263 aa).

Residues 1–20 form the signal peptide; that stretch reads MKISQLFLGLVACSTAFAYA. 4 residues coordinate heme b: His42, Tyr58, Ser104, and His105.

As to quaternary structure, monomer in solution. Interacts with host hemoglobin.

It is found in the secreted. Functionally, part of a high affinity heme acquisition system. Functions as a hemophore that acquires heme from human hemoglobin and delivers the heme to its cognate receptor, HphR, facilitating transport of heme across the bacterial outer membrane. Apo HphA interacts specifically with human hemoglobin and steals heme through a passive process probably due to its high affinity for heme. It can also acquire heme complexed to human serum albumin. Plays a supporting role for full virulence, acting as an accessory factor that enhances the process of heme uptake. This Acinetobacter baumannii protein is Hemophilin.